The following is a 181-amino-acid chain: MAADANNLIWIDLEMTGLEPDVDRVIEIATLVTDQELNIIGQGPVIAIHQSDEVLAAMDDWNQKHHGESGLIDRVRASQVNEAQAVAQTIAFLEQYVPKGASPMCGNSVGQDRRFLNRYMRELEDYFHYRNLDVSTVKELVKRWSPETMAGFKKQNTHQALQDIQESIAELQYYRSKVFKI.

One can recognise an Exonuclease domain in the interval 8 to 171 (LIWIDLEMTG…QDIQESIAEL (164 aa)). Residue tyrosine 129 is part of the active site.

Belongs to the oligoribonuclease family.

It is found in the cytoplasm. 3'-to-5' exoribonuclease specific for small oligoribonucleotides. In Shewanella sp. (strain MR-4), this protein is Oligoribonuclease.